The following is a 634-amino-acid chain: RNA polymerase sigma factor RpoD (634 aa).

The interval 177 to 202 (LHDETPENDEENSSETEGEEHEDNHL) is disordered. A compositionally biased stretch (acidic residues) spans 182–197 (PENDEENSSETEGEEH). The tract at residues 385-455 (MIEANLRLVI…TRAIADQART (71 aa)) is sigma-70 factor domain-2. The Interaction with polymerase core subunit RpoC signature appears at 409–412 (DLIQ). The interval 464-541 (ETINKILRTS…DKNAVAPIDA (78 aa)) is sigma-70 factor domain-3. A sigma-70 factor domain-4 region spans residues 554-607 (VLATLTPREERVLRMRFGIGMNTDHTLEEVGQQFKVTRERIRQIESKALRKLQH). The H-T-H motif DNA-binding region spans 580–599 (LEEVGQQFKVTRERIRQIES). Residues 608-634 (PIRSKKLNSFRSGGKRGDGNSSDLLEA) form a disordered region.

The protein belongs to the sigma-70 factor family. RpoD/SigA subfamily. In terms of assembly, interacts transiently with the RNA polymerase catalytic core.

It localises to the cytoplasm. Sigma factors are initiation factors that promote the attachment of RNA polymerase to specific initiation sites and are then released. This sigma factor is the primary sigma factor during exponential growth. In Rickettsia conorii (strain ATCC VR-613 / Malish 7), this protein is RNA polymerase sigma factor RpoD.